Reading from the N-terminus, the 255-residue chain is MAVTISIKEKAFVQEGRKNTVLENIELSIAPGEFLTLIGPSGCGKSTLLKIIAGLDSEYDGSVEINGRSVTAPGIQQGFIFQEHRLFPWLTVEQNIAADLNLKDPKVKQKVDELIEIVRLKGSEKAYPRELSGGMSQRVAIARALLREPEVLLLDEPFGALDAFTRKHLQDVLLDIWRKKKTTMILVTHDIDESVYLGNELAILKAKPGKIHKLMPIHLAYPRNRTTPDFQAIRQRVLSEFEKTEDLEYAEGSGI.

Residues 7-231 (IKEKAFVQEG…PRNRTTPDFQ (225 aa)) form the ABC transporter domain. 39–46 (GPSGCGKS) serves as a coordination point for ATP.

The protein belongs to the ABC transporter superfamily. Aliphatic sulfonates importer (TC 3.A.1.17.2) family. The complex is composed of two ATP-binding proteins (SsuB), two transmembrane proteins (SsuC) and a solute-binding protein (SsuA).

Its subcellular location is the cell membrane. It carries out the reaction ATP + H2O + aliphatic sulfonate-[sulfonate-binding protein]Side 1 = ADP + phosphate + aliphatic sulfonateSide 2 + [sulfonate-binding protein]Side 1.. Its function is as follows. Part of the ABC transporter complex SsuABC involved in aliphatic sulfonates import. Responsible for energy coupling to the transport system. Is also involved in taurine transport. The protein is Aliphatic sulfonates import ATP-binding protein SsuB of Bacillus subtilis (strain 168).